A 420-amino-acid chain; its full sequence is FLYWCH transcription factor 3 (420 aa).

Low complexity predominate over residues 87–104 (SSTSPDSQPSSSSSVMSS). Disordered stretches follow at residues 87–107 (SSTS…STDE) and 119–138 (KINK…YTPR). Residues 123–134 (AQRQSSPNSSKP) are compositionally biased toward polar residues. An FLYWCH-type zinc finger spans residues 140 to 195 (IRERVLFDEHLYVFDKCSYDSKKRFFRCERKNTCPARIHTPFDAERVIHKVQVHNH).

In terms of biological role, probable transcription factor. May bind to the promoters of target genes, including micro-RNA genes, in order to repress expression, and acting redundantly with flh-2. The chain is FLYWCH transcription factor 3 from Caenorhabditis elegans.